An 842-amino-acid chain; its full sequence is Microcephalin (842 aa).

The 93-residue stretch at 1-93 (MAAPILKDVV…AHIDESLFPA (93 aa)) folds into the BRCT 1 domain. Phosphoserine is present on residues Ser-279, Ser-287, Ser-296, and Ser-333. At Thr-335 the chain carries Phosphothreonine. The segment covering 346 to 359 (HSRPRSSSVKRKRV) has biased composition (basic residues). Disordered regions lie at residues 346–375 (HSRPRSSSVKRKRVSYGFHSPPKEKCKRKR), 418–443 (PDNLKERNSENLPPKSQLPSNPAQFS), and 563–624 (VGLK…PTRR). 2 stretches are compositionally biased toward polar residues: residues 434–443 (QLPSNPAQFS) and 566–582 (KSTQDKGTTSKISNSSE). Basic and acidic residues predominate over residues 586–608 (PSEHEPRSVVDCNVERSAEEKEN). BRCT domains lie at 647 to 737 (SGKG…PFEL) and 758 to 840 (YRGT…NYLL).

Interacts with CDC27 and maybe other components of the APC/C complex. Interacts with histone variant H2AX under DNA damage conditions.

The protein resides in the cytoplasm. The protein localises to the cytoskeleton. It localises to the microtubule organizing center. Its subcellular location is the centrosome. Functionally, implicated in chromosome condensation and DNA damage induced cellular responses. May play a role in neurogenesis and regulation of the size of the cerebral cortex. This chain is Microcephalin, found in Macaca fascicularis (Crab-eating macaque).